The following is a 63-amino-acid chain: ATPase inhibitor, mitochondrial (63 aa).

The disordered stretch occupies residues 1-23 (TAGATGATRQDGSTDAFEKREKA). A coiled-coil region spans residues 18-62 (EKREKAQEDLYIRQHEKEQLEALKESLKKQKKSLDDLEBKIDDLT).

The protein belongs to the ATPase inhibitor family.

The protein localises to the mitochondrion. In terms of biological role, this protein forms a one-to-one complex with ATPase to inhibit the enzyme activity completely. The polypeptide is ATPase inhibitor, mitochondrial (Cyberlindnera jadinii (Torula yeast)).